We begin with the raw amino-acid sequence, 146 residues long: MLVLIQRVSQAAVHVDDEAVGQIGPGLLALVGMEPGDTEAQLRRMAERLLGYRVFADEAGKMNRSLRDTGGGLLLVSQFTLAADTRSGMRPSFTTAAPPEEAERGFNRFVEICRENHAPGVETGRFGAHMVVSLVNDGPVTFLLRP.

The Gly-cisPro motif, important for rejection of L-amino acids signature appears at 138–139 (GP).

It belongs to the DTD family. Homodimer.

It localises to the cytoplasm. It carries out the reaction glycyl-tRNA(Ala) + H2O = tRNA(Ala) + glycine + H(+). The catalysed reaction is a D-aminoacyl-tRNA + H2O = a tRNA + a D-alpha-amino acid + H(+). An aminoacyl-tRNA editing enzyme that deacylates mischarged D-aminoacyl-tRNAs. Also deacylates mischarged glycyl-tRNA(Ala), protecting cells against glycine mischarging by AlaRS. Acts via tRNA-based rather than protein-based catalysis; rejects L-amino acids rather than detecting D-amino acids in the active site. By recycling D-aminoacyl-tRNA to D-amino acids and free tRNA molecules, this enzyme counteracts the toxicity associated with the formation of D-aminoacyl-tRNA entities in vivo and helps enforce protein L-homochirality. The polypeptide is D-aminoacyl-tRNA deacylase (Stenotrophomonas maltophilia (strain K279a)).